Consider the following 156-residue polypeptide: Ribosomal RNA large subunit methyltransferase H (156 aa).

Residues leucine 73, glycine 104, and 123-128 (VSSLTL) each bind S-adenosyl-L-methionine.

Belongs to the RNA methyltransferase RlmH family. In terms of assembly, homodimer.

Its subcellular location is the cytoplasm. It catalyses the reaction pseudouridine(1915) in 23S rRNA + S-adenosyl-L-methionine = N(3)-methylpseudouridine(1915) in 23S rRNA + S-adenosyl-L-homocysteine + H(+). In terms of biological role, specifically methylates the pseudouridine at position 1915 (m3Psi1915) in 23S rRNA. The chain is Ribosomal RNA large subunit methyltransferase H from Paraburkholderia phytofirmans (strain DSM 17436 / LMG 22146 / PsJN) (Burkholderia phytofirmans).